The following is a 103-amino-acid chain: Large ribosomal subunit protein bL21 (103 aa).

The protein belongs to the bacterial ribosomal protein bL21 family. Part of the 50S ribosomal subunit. Contacts protein L20.

This protein binds to 23S rRNA in the presence of protein L20. The polypeptide is Large ribosomal subunit protein bL21 (Haemophilus influenzae (strain PittEE)).